The primary structure comprises 524 residues: Protein hunchback (524 aa).

Disordered regions lie at residues 42–86 (IVKR…PQTQ) and 101–187 (YNHN…DEQS). Positions 59–75 (SGSDFHSSSPSSDTSQD) are enriched in low complexity. The segment covering 76 to 86 (LQHSYQSPQTQ) has biased composition (polar residues). Basic and acidic residues-rich tracts occupy residues 118–127 (KSEKEEKDME), 138–154 (RKPD…EMSL), and 164–178 (TSEH…KSDN). C2H2-type zinc fingers lie at residues 202–224 (FKCK…SKVH), 231–253 (LTCP…LRNH), 259–281 (FQCN…MKSH), and 298–311 (YCHS…RYGH). The disordered stretch occupies residues 402 to 442 (DLSKPGCSYTGEQKSRRKGPAFKVDPTQVESEEEDEETSTT). C2H2-type zinc fingers lie at residues 471–493 (NSCQ…MGYH) and 499–523 (FTCN…RVSH).

Belongs to the hunchback C2H2-type zinc-finger protein family.

Its subcellular location is the nucleus. Gap class segmentation protein that controls development of head structures. The chain is Protein hunchback (hb) from Tribolium castaneum (Red flour beetle).